The primary structure comprises 194 residues: MIPKLIVGLGNPEPKYDQTRHNIGFAVVDALAITWQCSWYDHKRFQGWFGEGLMAGQKTCLLKPRTYMNRSGQAVRAVVDWYKLDPQSVLVVYDDMDLPLGRLRLRQTGSAGGHNGMKSLISHLGTQDFPRLRLGIGKSDGSKDTIAHVLGKFSPSELPIVEKSLDLATEAIAHSLHHGIAKTMSLFNNRDVCP.

Residue Tyr-16 participates in tRNA binding. The active-site Proton acceptor is the His-21. 3 residues coordinate tRNA: Tyr-67, Asn-69, and Asn-115.

This sequence belongs to the PTH family. In terms of assembly, monomer.

It localises to the cytoplasm. It carries out the reaction an N-acyl-L-alpha-aminoacyl-tRNA + H2O = an N-acyl-L-amino acid + a tRNA + H(+). In terms of biological role, hydrolyzes ribosome-free peptidyl-tRNAs (with 1 or more amino acids incorporated), which drop off the ribosome during protein synthesis, or as a result of ribosome stalling. Its function is as follows. Catalyzes the release of premature peptidyl moieties from peptidyl-tRNA molecules trapped in stalled 50S ribosomal subunits, and thus maintains levels of free tRNAs and 50S ribosomes. The chain is Peptidyl-tRNA hydrolase from Synechocystis sp. (strain ATCC 27184 / PCC 6803 / Kazusa).